The sequence spans 454 residues: Bifunctional protein GlmU (454 aa).

Positions 1–232 (MTDRTCLSIV…VDNVIGINNR (232 aa)) are pyrophosphorylase. Residues 11-14 (LAAG), K25, Q78, and 83-84 (GT) each bind UDP-N-acetyl-alpha-D-glucosamine. D108 lines the Mg(2+) pocket. UDP-N-acetyl-alpha-D-glucosamine contacts are provided by G144, E158, N173, and N230. N230 is a binding site for Mg(2+). The tract at residues 233–253 (VELAEAEAIWQQRKRREMMLA) is linker. An N-acetyltransferase region spans residues 254–454 (GVTLIAPETV…AIKAAKTATK (201 aa)). 2 residues coordinate UDP-N-acetyl-alpha-D-glucosamine: R319 and K337. H349 acts as the Proton acceptor in catalysis. Y352 and N363 together coordinate UDP-N-acetyl-alpha-D-glucosamine. Acetyl-CoA contacts are provided by residues A366, 372–373 (NY), S391, S409, and R426.

This sequence in the N-terminal section; belongs to the N-acetylglucosamine-1-phosphate uridyltransferase family. It in the C-terminal section; belongs to the transferase hexapeptide repeat family. Homotrimer. Requires Mg(2+) as cofactor.

The protein resides in the cytoplasm. It catalyses the reaction alpha-D-glucosamine 1-phosphate + acetyl-CoA = N-acetyl-alpha-D-glucosamine 1-phosphate + CoA + H(+). It carries out the reaction N-acetyl-alpha-D-glucosamine 1-phosphate + UTP + H(+) = UDP-N-acetyl-alpha-D-glucosamine + diphosphate. The protein operates within nucleotide-sugar biosynthesis; UDP-N-acetyl-alpha-D-glucosamine biosynthesis; N-acetyl-alpha-D-glucosamine 1-phosphate from alpha-D-glucosamine 6-phosphate (route II): step 2/2. It functions in the pathway nucleotide-sugar biosynthesis; UDP-N-acetyl-alpha-D-glucosamine biosynthesis; UDP-N-acetyl-alpha-D-glucosamine from N-acetyl-alpha-D-glucosamine 1-phosphate: step 1/1. It participates in bacterial outer membrane biogenesis; LPS lipid A biosynthesis. Functionally, catalyzes the last two sequential reactions in the de novo biosynthetic pathway for UDP-N-acetylglucosamine (UDP-GlcNAc). The C-terminal domain catalyzes the transfer of acetyl group from acetyl coenzyme A to glucosamine-1-phosphate (GlcN-1-P) to produce N-acetylglucosamine-1-phosphate (GlcNAc-1-P), which is converted into UDP-GlcNAc by the transfer of uridine 5-monophosphate (from uridine 5-triphosphate), a reaction catalyzed by the N-terminal domain. The sequence is that of Bifunctional protein GlmU from Brucella anthropi (strain ATCC 49188 / DSM 6882 / CCUG 24695 / JCM 21032 / LMG 3331 / NBRC 15819 / NCTC 12168 / Alc 37) (Ochrobactrum anthropi).